The sequence spans 396 residues: Adenylyltransferase and sulfurtransferase UBA4 (396 aa).

ATP is bound by residues glycine 51, aspartate 72, 79–83 (SNLHR), lysine 95, and 139–140 (DG). 2 residues coordinate Zn(2+): cysteine 180 and cysteine 183. Cysteine 197 acts as the Glycyl thioester intermediate; for adenylyltransferase activity in catalysis. Zn(2+) contacts are provided by cysteine 257 and cysteine 260. The Rhodanese domain occupies 305 to 394 (VSTKHILLDV…WAKNVDEKFP (90 aa)). Cysteine 355 functions as the Cysteine persulfide intermediate; for sulfurtransferase activity in the catalytic mechanism.

This sequence in the N-terminal section; belongs to the HesA/MoeB/ThiF family. UBA4 subfamily. It depends on Zn(2+) as a cofactor.

The protein localises to the cytoplasm. The protein resides in the cytosol. The protein operates within tRNA modification; 5-methoxycarbonylmethyl-2-thiouridine-tRNA biosynthesis. Functionally, plays a central role in 2-thiolation of mcm(5)S(2)U at tRNA wobble positions of cytosolic tRNA(Lys), tRNA(Glu) and tRNA(Gln). Acts by mediating the C-terminal thiocarboxylation of sulfur carrier URM1. Its N-terminus first activates URM1 as acyl-adenylate (-COAMP), then the persulfide sulfur on the catalytic cysteine is transferred to URM1 to form thiocarboxylation (-COSH) of its C-terminus. The reaction probably involves hydrogen sulfide that is generated from the persulfide intermediate and that acts as a nucleophile towards URM1. Subsequently, a transient disulfide bond is formed. Does not use thiosulfate as sulfur donor; NFS1 probably acting as a sulfur donor for thiocarboxylation reactions. Prior mcm(5) tRNA modification by the elongator complex is required for 2-thiolation. May also be involved in protein urmylation. This Yarrowia lipolytica (strain CLIB 122 / E 150) (Yeast) protein is Adenylyltransferase and sulfurtransferase UBA4.